The sequence spans 138 residues: MARLTVEECMGRTNNKFKLVILASQRAHDLNSGACPVIKYKNGKNTVIALKEIAAKQLDVSSLFNLSVQRCRKYMEKFINSDEPYIAHKPKNNVDIFQASAVAGNSDGLENSSNSRDDNPLGRDNFFSTPENRNNTNS.

The tract at residues 104-138 is disordered; sequence GNSDGLENSSNSRDDNPLGRDNFFSTPENRNNTNS. Residues 126–138 show a composition bias toward polar residues; it reads FFSTPENRNNTNS.

It belongs to the RNA polymerase subunit omega family. In terms of assembly, the RNAP catalytic core consists of 2 alpha, 1 beta, 1 beta' and 1 omega subunit. When a sigma factor is associated with the core the holoenzyme is formed, which can initiate transcription.

It catalyses the reaction RNA(n) + a ribonucleoside 5'-triphosphate = RNA(n+1) + diphosphate. In terms of biological role, promotes RNA polymerase assembly. Latches the N- and C-terminal regions of the beta' subunit thereby facilitating its interaction with the beta and alpha subunits. This is DNA-directed RNA polymerase subunit omega from Ehrlichia chaffeensis (strain ATCC CRL-10679 / Arkansas).